The sequence spans 295 residues: Ent-pimara-9(11),15-diene synthase (295 aa).

Belongs to the terpene synthase family. As to quaternary structure, monomer. A divalent metal cation serves as cofactor.

The catalysed reaction is ent-copalyl diphosphate = ent-pimara-9(11),15-diene + diphosphate. Its pathway is antibiotic biosynthesis. Involved in viguiepinol biosynthesis. Catalyzes the conversion of copalyl diphosphate (ent-CDP) into pimara-9(11),15-diene (PMD). The protein is Ent-pimara-9(11),15-diene synthase of Streptomyces sp. (strain KO-3988).